The primary structure comprises 414 residues: Putative MSV199 domain-containing protein 148R (414 aa).

Residues 209-293 are a coiled coil; that stretch reads DKMQISSLET…DSVVEKLGIA (85 aa).

The protein is Putative MSV199 domain-containing protein 148R of Acheta domesticus (House cricket).